Reading from the N-terminus, the 428-residue chain is MSMSMAPATVLQLLRGLSTPRLLTHIHQHRALGNHYHHYHQHYQHQHHLLHHQQQYLRLFTCTALPAAAPALFSILHTARGYSSTTKQEAGATGPNDAPEVAPNAPLLAKLFPQTSPEVDSNAEQERKKREEEEEKENERAWKRMKLGFAIFGGSAVAAGFWAVYEFGKPEVDPNGQPIEDEFTHKPLVQQYLQRMWKSIHYYQRMIQEPSRAKLLPDPLKPPYVQPRYTLVLEMKDVLVHPDWTYQTGWRFKKRPGVDHFLAECAKDFEIVVFTAEQGMTVFPILDALDPNGYIMYRLVRDATHFVDGHHVKNLDNLNRDLKKVIVVDWDANATKMHPDNTFGLARWHGNDDDGQLLDLIAFLKIIAQNNVDDVREVLHYYRQFDDPINQFRENQRKLAEQMLEAERIEQSKTKPMVKQWSRNILGR.

The chain crosses the membrane as a helical span at residues leucine 59 to alanine 79. Over arginine 80–arginine 428 the chain is Mitochondrial intermembrane. Positions phenylalanine 112–asparagine 138 are disordered. Residues glutamate 124–asparagine 138 show a composition bias toward basic and acidic residues. In terms of domain architecture, FCP1 homology spans tyrosine 224 to isoleucine 367.

Belongs to the TIM50 family. In terms of assembly, component of the TIM23 complex at least composed of Tim23, Tim17 (Tim17a1, Tim17a2 or Tim17b1) and a Tim50.

It localises to the mitochondrion inner membrane. Essential component of the TIM23 complex, a complex that mediates the translocation of transit peptide-containing proteins across the mitochondrial inner membrane. This chain is Mitochondrial import inner membrane translocase subunit TIM50-C (ttm50), found in Drosophila melanogaster (Fruit fly).